The primary structure comprises 523 residues: Light-independent protochlorophyllide reductase subunit B (523 aa).

Residue Asp36 participates in [4Fe-4S] cluster binding. The active-site Proton donor is Asp290. Position 425-426 (425-426 (GL)) interacts with substrate.

This sequence belongs to the ChlB/BchB/BchZ family. Protochlorophyllide reductase is composed of three subunits; ChlL, ChlN and ChlB. Forms a heterotetramer of two ChlB and two ChlN subunits. The cofactor is [4Fe-4S] cluster.

The catalysed reaction is chlorophyllide a + oxidized 2[4Fe-4S]-[ferredoxin] + 2 ADP + 2 phosphate = protochlorophyllide a + reduced 2[4Fe-4S]-[ferredoxin] + 2 ATP + 2 H2O. Its pathway is porphyrin-containing compound metabolism; chlorophyll biosynthesis (light-independent). Component of the dark-operative protochlorophyllide reductase (DPOR) that uses Mg-ATP and reduced ferredoxin to reduce ring D of protochlorophyllide (Pchlide) to form chlorophyllide a (Chlide). This reaction is light-independent. The NB-protein (ChlN-ChlB) is the catalytic component of the complex. This chain is Light-independent protochlorophyllide reductase subunit B, found in Prochlorococcus marinus (strain MIT 9301).